Consider the following 317-residue polypeptide: Pseudouridine-5'-phosphate glycosidase (317 aa).

The active-site Proton donor is the Glu27. 2 residues coordinate substrate: Lys89 and Val109. Position 141 (Asp141) interacts with Mn(2+). 143–145 (SAD) lines the substrate pocket. Residue Lys162 is the Nucleophile of the active site.

The protein belongs to the pseudouridine-5'-phosphate glycosidase family. As to quaternary structure, homotrimer. Mn(2+) serves as cofactor.

It carries out the reaction D-ribose 5-phosphate + uracil = psi-UMP + H2O. Catalyzes the reversible cleavage of pseudouridine 5'-phosphate (PsiMP) to ribose 5-phosphate and uracil. Functions biologically in the cleavage direction, as part of a pseudouridine degradation pathway. The polypeptide is Pseudouridine-5'-phosphate glycosidase (Sorangium cellulosum (strain So ce56) (Polyangium cellulosum (strain So ce56))).